We begin with the raw amino-acid sequence, 392 residues long: Speckle-type POZ protein-like A (392 aa).

In terms of domain architecture, MATH spans 31 to 161 (KFSYMWTINN…DDKLTLFCEV (131 aa)). The BTB domain maps to 200-267 (TDCSLYVGGQ…IYTGKAPNLE (68 aa)).

Belongs to the Tdpoz family. In terms of assembly, homodimer. Heterodimer with SPOP. Component of cullin-RING-based BCR (BTB-CUL3-RBX1) E3 ubiquitin-protein ligase complexes containing homodimeric SPOPL or the heterodimer formed by SPOP and SPOPL.

It is found in the nucleus. It participates in protein modification; protein ubiquitination. In terms of biological role, component of a cullin-RING-based BCR (BTB-CUL3-RBX1) E3 ubiquitin-protein ligase complex that mediates the ubiquitination and subsequent proteasomal degradation of target proteins, but with relatively low efficiency. The sequence is that of Speckle-type POZ protein-like A (spopla) from Danio rerio (Zebrafish).